The following is a 65-amino-acid chain: Large ribosomal subunit protein bL35 (65 aa).

The segment covering 1 to 10 has biased composition (basic and acidic residues); that stretch reads MPKMKTDRGA. Residues 1 to 24 are disordered; sequence MPKMKTDRGAAKRFKKTGSGGFKC.

The protein belongs to the bacterial ribosomal protein bL35 family.

The polypeptide is Large ribosomal subunit protein bL35 (Tolumonas auensis (strain DSM 9187 / NBRC 110442 / TA 4)).